Here is a 54-residue protein sequence, read N- to C-terminus: Small ribosomal subunit protein uS14 (54 aa).

Zn(2+) is bound by residues Cys19, Cys22, Cys37, and Cys40.

This sequence belongs to the universal ribosomal protein uS14 family. Zinc-binding uS14 subfamily. As to quaternary structure, part of the 30S ribosomal subunit. The cofactor is Zn(2+).

In terms of biological role, binds 16S rRNA, required for the assembly of 30S particles. This Pyrobaculum aerophilum (strain ATCC 51768 / DSM 7523 / JCM 9630 / CIP 104966 / NBRC 100827 / IM2) protein is Small ribosomal subunit protein uS14.